The following is a 1700-amino-acid chain: Ras-responsive element-binding protein 1 (1700 aa).

A disordered region spans residues 31-63 (TENGGSPQGIKSPMKPPGPNRIGRRNQETKEEK). Residues Ser36 and Ser42 each carry the phosphoserine modification. C2H2-type zinc fingers lie at residues 66–88 (YNCP…IRQH), 97–119 (HACS…MLVH), and 125–147 (YKCT…MKIH). The segment at 146 to 195 (IHEKDTNSTTAAAPPSPLKRRRLSSKRKLSHDAESEDPGPAKKMVEDGQS) is disordered. Ser161 bears the Phosphoserine mark. Basic residues predominate over residues 163–174 (LKRRRLSSKRKL). Phosphoserine is present on residues Ser175 and Ser180. The span at 184–195 (GPAKKMVEDGQS) shows a compositional bias: basic and acidic residues. The C2H2-type 4 zinc-finger motif lies at 206–228 (FHCPVCFKEFVCKYELETHMETH). Position 229 is a phosphoserine (Ser229). C2H2-type zinc fingers lie at residues 233–256 (LRCD…ALVH) and 314–336 (FVCD…RQSH). Residues Lys433, Lys500, Lys549, Lys564, Lys591, and Lys611 each participate in a glycyl lysine isopeptide (Lys-Gly) (interchain with G-Cter in SUMO2) cross-link. Lys613 is covalently cross-linked (Glycyl lysine isopeptide (Lys-Gly) (interchain with G-Cter in SUMO1); alternate). Lys613 participates in a covalent cross-link: Glycyl lysine isopeptide (Lys-Gly) (interchain with G-Cter in SUMO2); alternate. Residue Lys622 forms a Glycyl lysine isopeptide (Lys-Gly) (interchain with G-Cter in SUMO2) linkage. 5 C2H2-type zinc fingers span residues 641–663 (YPCR…VRSH), 669–691 (YQCN…IRTH), 697–720 (YICK…RKKH), 751–782 (TVCR…GGCH), and 788–813 (FECK…QHLH). Residues Lys855, Lys883, and Lys911 each participate in a glycyl lysine isopeptide (Lys-Gly) (interchain with G-Cter in SUMO2) cross-link. Disordered regions lie at residues 939–991 (IPKS…SLET) and 1092–1177 (ADPG…AVDL). Basic and acidic residues predominate over residues 944-961 (KKGDKDTVVPSDAKKPEP). Ser970 is subject to Phosphoserine. Over residues 1097–1111 (SITSSNTVATDSPGS) the composition is skewed to polar residues. Phosphoserine is present on residues Ser1125, Ser1137, and Ser1138. The segment covering 1137 to 1146 (SSPEEALPTE) has biased composition (low complexity). Positions 1155–1165 (SRKRGRKRGLR) are enriched in basic residues. Ser1172, Ser1179, Ser1180, and Ser1230 each carry phosphoserine. Disordered regions lie at residues 1195–1235 (TNKF…AEDR), 1273–1368 (HTDS…QSLD), 1383–1521 (SEAG…RKKV), and 1564–1670 (VRHQ…SPAA). The C2H2-type 12 zinc finger occupies 1251-1273 (INCPHCPRVFPWASSLQRHMLTH). The span at 1273–1285 (HTDSQSDTDTLTT) shows a compositional bias: low complexity. Acidic residues predominate over residues 1327 to 1346 (SEEEEEKETEENPEPEEECR). A C2H2-type 13 zinc finger spans residues 1400–1422 (HACDTCGKNFKFLGTLSRHKKAH). 2 positions are modified to phosphoserine: Ser1450 and Ser1452. Basic and acidic residues predominate over residues 1492–1507 (TAEKRGDGDKRPKTDS). 2 C2H2-type zinc fingers span residues 1520 to 1542 (KVCS…MRSH) and 1548 to 1570 (YKCQ…QRIH). Residues 1564–1580 (VRHQRIHQKARHSKHHG) show a composition bias toward basic residues. 2 positions are modified to phosphoserine: Ser1593 and Ser1606. Over residues 1645–1660 (AEQAAEPSAPKEQASP) the composition is skewed to low complexity. Ser1667 is modified (phosphoserine).

Belongs to the krueppel C2H2-type zinc-finger protein family. Interacts with NEUROD1. Interacts with AR. As to expression, expressed in splenic B-cells.

Its subcellular location is the nucleus speckle. In terms of biological role, transcription factor that binds specifically to the RAS-responsive elements (RRE) of gene promoters. Represses the angiotensinogen gene. Negatively regulates the transcriptional activity of AR. Potentiates the transcriptional activity of NEUROD1. Binds specifically to the allelic variant of the CDKN2A promoter present in Balb/c mice, which leads to a down-regulation of CDKN2A expression in this strain, and, as a consequence, to an elevated susceptibility to pristane-induced tumors. Promotes brown adipocyte differentiation. May be involved in Ras/Raf-mediated cell differentiation by enhancing calcitonin expression. The polypeptide is Ras-responsive element-binding protein 1 (Rreb1) (Mus musculus (Mouse)).